The primary structure comprises 513 residues: Histidine ammonia-lyase (513 aa).

The segment at residues 142-144 is a cross-link (5-imidazolinone (Ala-Gly)); sequence ASG. Residue Ser-143 is modified to 2,3-didehydroalanine (Ser).

It belongs to the PAL/histidase family. Contains an active site 4-methylidene-imidazol-5-one (MIO), which is formed autocatalytically by cyclization and dehydration of residues Ala-Ser-Gly.

The protein resides in the cytoplasm. It catalyses the reaction L-histidine = trans-urocanate + NH4(+). Its pathway is amino-acid degradation; L-histidine degradation into L-glutamate; N-formimidoyl-L-glutamate from L-histidine: step 1/3. The chain is Histidine ammonia-lyase from Methylobacterium sp. (strain 4-46).